The primary structure comprises 837 residues: MGIQGLLQFIQEASEPVNVKKYKGQAVAVDTYCWLHKGAIACAEKLAKGEPTDRYVGFCMKFVNMLLSYGVKPILIFDGCTLPSKKEVERSRRERRQSNLLKGKQLLREGKVSEARDCFARSINITHAMAHKVIKAARALGVDCLVAPYEADAQLAYLNKAGIVQAVITEDSDLLAFGCKKVILKMDQFGNGLEVDQARLGMCKQLGDVFTEEKFRYMCILSGCDYLASLRGIGLAKACKVLRLANNPDIVKVIKKIGHYLRMNITVPEDYITGFIRANNTFLYQLVFDPIQRKLVPLNAYGDDVNPETLTYAGQYVGDSVALQIALGNRDVNTFEQIDDYSPDTMPAHSRSHSWNEKAGQKPPGTNSIWHKNYCPRLEVNSVSHAPQLKEKPSTLGLKQVISTKGLNLPRKSCVLKRPRNEALAEDDLLSQYSSVSKKIKENGCGDGTSPNSSKMSKSCPDSGTAHKTDAHTPSKMRNKFATFLQRRNEESGAVVVPGTRSRFFCSSQDFDNFIPKKESGQPLNETVATGKATTSLLGALDCPDTEGHKPVDANGTHNLSSQIPGNAAVSPEDEAQSSETSKLLGAMSPPSLGTLRSCFSWSGTLREFSRTPSPSASTTLQQFRRKSDPPACLPEASAVVTDRCDSKSEMLGETSQPLHELGCSSRSQESMDSSCGLNTSSLSQPSSRDSGSEESDCNNKSLDNQGEQNSKQHLPHFSKKDGLRRNKVPGLCRSSSMDSFSTTKIKPLVPARVSGLSKKSGSMQTRKHHDVENKPGLQTKISELWKNFGFKKDSEKLPSCKKPLSPVKDNIQLTPETEDEIFNKPECVRAQRAIFH.

An N-domain region spans residues 1–99 (MGIQGLLQFI…RSRRERRQSN (99 aa)). Mg(2+) is bound by residues aspartate 30, aspartate 78, glutamate 150, aspartate 152, aspartate 171, aspartate 173, and aspartate 225. Residues 129–386 (MAHKVIKAAR…RLEVNSVSHA (258 aa)) are interaction with MSH3. The tract at residues 138-229 (RALGVDCLVA…ILSGCDYLAS (92 aa)) is I-domain. Disordered regions lie at residues 345 to 367 (TMPA…PGTN) and 440 to 477 (IKEN…PSKM). The interaction with MLH1 stretch occupies residues 387–488 (PQLKEKPSTL…NKFATFLQRR (102 aa)). A compositionally biased stretch (polar residues) spans 449-462 (TSPNSSKMSKSCPD). The residue at position 480 (lysine 480) is an N6-acetyllysine. Residues 555 to 589 (NGTHNLSSQIPGNAAVSPEDEAQSSETSKLLGAMS) are disordered. Positions 556 to 565 (GTHNLSSQIP) are enriched in polar residues. A phosphoserine mark is found at serine 589 and serine 601. An interaction with MSH2 region spans residues 591-837 (PSLGTLRSCF…CVRAQRAIFH (247 aa)). Residues 608-740 (EFSRTPSPSA…GLCRSSSMDS (133 aa)) are disordered. Polar residues-rich tracts occupy residues 611 to 623 (RTPS…TLQQ), 665 to 690 (SSRS…SSRD), and 699 to 713 (NNKS…NSKQ). Threonine 612 carries the post-translational modification Phosphothreonine. Residues serine 614 and serine 666 each carry the phosphoserine modification. Serine 737 carries the post-translational modification Phosphoserine. Residues 778–837 (LQTKISELWKNFGFKKDSEKLPSCKKPLSPVKDNIQLTPETEDEIFNKPECVRAQRAIFH) form an interaction with MLH1 region.

This sequence belongs to the XPG/RAD2 endonuclease family. EXO1 subfamily. Interacts with the MLH1-PMS2 heterodimer via MLH1. Interacts with MSH3. Interacts with the MSH2-MSH6 heterodimer via MSH2, and this interaction may increase the processivity of the 5'-&gt;3' exonuclease activity. Interacts with PCNA, and this interaction may both stimulate the cryptic 3'-&gt;5' exonuclease activity and suppress the 5'-&gt;3' exonuclease activity. Interacts with WRN, and this interaction stimulates both the 5'-&gt;3' exonuclease activity and cleavage of 5'-overhanging flap structures. Interacts with RECQL/RECQ1, and this interaction stimulates cleavage of 5'-overhanging flap structures. Interacts with DNA helicase ZGRF1; the interaction is increased following DNA damage induction. It depends on Mg(2+) as a cofactor. In terms of processing, phosphorylated upon DNA damage and in response to agents stalling DNA replication, probably by ATM or ATR. In terms of tissue distribution, highly expressed in the spleen and testis. Also expressed in the bone marrow, brain, lung, lymph node and thymus.

The protein localises to the nucleus. In terms of biological role, 5'-&gt;3' double-stranded DNA exonuclease which may also possess a cryptic 3'-&gt;5' double-stranded DNA exonuclease activity. Functions in DNA mismatch repair (MMR) to excise mismatch-containing DNA tracts directed by strand breaks located either 5' or 3' to the mismatch. Also exhibits endonuclease activity against 5'-overhanging flap structures similar to those generated by displacement synthesis when DNA polymerase encounters the 5'-end of a downstream Okazaki fragment. Required for somatic hypermutation (SHM) and class switch recombination (CSR) of immunoglobulin genes. Essential for male and female meiosis. The sequence is that of Exonuclease 1 (Exo1) from Mus musculus (Mouse).